A 294-amino-acid chain; its full sequence is uncharacterized protein (294 aa).

This is an uncharacterized protein from Bacillus subtilis (strain 168).